We begin with the raw amino-acid sequence, 969 residues long: Lateral signaling target protein 2 homolog (969 aa).

K87 is covalently cross-linked (Glycyl lysine isopeptide (Lys-Gly) (interchain with G-Cter in ubiquitin)). 4 disordered regions span residues 290-323, 336-360, 390-437, and 715-777; these read QDGE…GVEE, SVWK…EEPI, STLL…YHDD, and RSEC…DMSE. Positions 295-310 are enriched in polar residues; sequence PTSSTNDPSASTGPDS. Residues 336–346 show a composition bias toward basic and acidic residues; sequence SVWKEEEEKQV. Over residues 391–402 the composition is skewed to polar residues; that stretch reads TLLSPPSQNQSP. Residues 411–423 are compositionally biased toward low complexity; sequence GSSLEGSSATSST. A compositionally biased stretch (basic and acidic residues) spans 715-729; that stretch reads RSECFGKQSKDDNRK. 2 stretches are compositionally biased toward low complexity: residues 732–745 and 756–769; these read SSSQ…VPSS and SLSS…VSSL. The FYVE-type zinc finger occupies 899 to 959; it reads DEACNSCIAC…VCTHCYMFHV (61 aa). 8 residues coordinate Zn(2+): C905, C908, C921, C924, C929, C932, C951, and C954.

It belongs to the lst-2 family. Post-translationally, monoubiquitination at Lys-87 prevents binding to phosphatidylinositol 3-phosphate (PI3P) and localization to early endosome membranes.

Its subcellular location is the cytoplasm. The protein localises to the cytosol. The protein resides in the early endosome membrane. Its function is as follows. Negative regulator of epidermal growth factor receptor (EGFR) signaling. Acts by promoting EGFR degradation in endosomes when not monoubiquitinated. The sequence is that of Lateral signaling target protein 2 homolog (zfyve28) from Danio rerio (Zebrafish).